A 520-amino-acid chain; its full sequence is MTDISILNDIQKIIVLDYGSQYNQLIARRIREFGVFSELKSHKITADEIRDINPIGIVLSGGPNSVYADGAFGIDEEIFELGIPILGICYGMQLITHKLGGKVLPAGEAGHREYGQSALRLRSESALFAGTPQEQLVLMSHGDAVTEIPEGFHLVGDSVDCPFAAMENTEKQFYGIQFHPEVRHSVYGNDILKNFAVNICGARGDWSMDNFIDMEIAKIRETVGDRKVLLGLSGGVDSSVVGVLLQRAIGDQLTCIFVDHGLLRKNEGDQVMDMLGGKFGLNIIRVDASKRFLDLLSGVEDPERKRKIIGNEFVYVFDDEASKLKGVDFLAQGTLYTDIIESGTETAQTIKSHHNVGGLPEDMQFELIEPLNTLFKDEVRALGTALGMPDEVVWRQPFPGPGLAIRVMGEITEEKLETVRESDAILREEIAKAGLDRDVWQYFTVNTGVRSVGVMGDGRTYDYTIAIRAITSIDGMTADFAQLPWDVLKKISTRIVNEVDHVNRIVYDITSKPPATVEWE.

In terms of domain architecture, Glutamine amidotransferase type-1 spans 12–205 (KIIVLDYGSQ…AVNICGARGD (194 aa)). Residue Cys89 is the Nucleophile of the active site. Catalysis depends on residues His179 and Glu181. A GMPS ATP-PPase domain is found at 206–395 (WSMDNFIDME…LGMPDEVVWR (190 aa)). 233–239 (SGGVDSS) serves as a coordination point for ATP.

In terms of assembly, homodimer.

The enzyme catalyses XMP + L-glutamine + ATP + H2O = GMP + L-glutamate + AMP + diphosphate + 2 H(+). It functions in the pathway purine metabolism; GMP biosynthesis; GMP from XMP (L-Gln route): step 1/1. Functionally, catalyzes the synthesis of GMP from XMP. The chain is GMP synthase [glutamine-hydrolyzing] from Streptococcus agalactiae serotype III (strain NEM316).